Consider the following 496-residue polypeptide: Glutamyl-tRNA(Gln) amidotransferase subunit A (496 aa).

Active-site charge relay system residues include lysine 75 and serine 150. Serine 174 (acyl-ester intermediate) is an active-site residue.

Belongs to the amidase family. GatA subfamily. As to quaternary structure, heterotrimer of A, B and C subunits.

The catalysed reaction is L-glutamyl-tRNA(Gln) + L-glutamine + ATP + H2O = L-glutaminyl-tRNA(Gln) + L-glutamate + ADP + phosphate + H(+). Functionally, allows the formation of correctly charged Gln-tRNA(Gln) through the transamidation of misacylated Glu-tRNA(Gln) in organisms which lack glutaminyl-tRNA synthetase. The reaction takes place in the presence of glutamine and ATP through an activated gamma-phospho-Glu-tRNA(Gln). The chain is Glutamyl-tRNA(Gln) amidotransferase subunit A from Burkholderia ambifaria (strain ATCC BAA-244 / DSM 16087 / CCUG 44356 / LMG 19182 / AMMD) (Burkholderia cepacia (strain AMMD)).